We begin with the raw amino-acid sequence, 540 residues long: [Co(II) methylated amine-specific corrinoid protein] reductase (540 aa).

4Fe-4S ferredoxin-type domains lie at 471-500 and 504-535; these read IILE…IVER and RIAK…ITKL. Residues Cys-480, Cys-483, Cys-486, Cys-490, Cys-513, Cys-518, Cys-521, and Cys-525 each contribute to the [4Fe-4S] cluster site.

In terms of assembly, monomer. [4Fe-4S] cluster serves as cofactor.

The catalysed reaction is 2 Co(II)-[methylamine-specific corrinoid protein] + AH2 + ATP + H2O = 2 Co(I)-[methylamine-specific corrinoid protein] + A + ADP + phosphate + 3 H(+). It carries out the reaction 2 Co(II)-[dimethylamine-specific corrinoid protein] + AH2 + ATP + H2O = 2 Co(I)-[dimethylamine-specific corrinoid protein] + A + ADP + phosphate + 3 H(+). It catalyses the reaction 2 Co(II)-[trimethylamine-specific corrinoid protein] + AH2 + ATP + H2O = 2 Co(I)-[trimethylamine-specific corrinoid protein] + A + ADP + phosphate + 3 H(+). Its pathway is one-carbon metabolism; methanogenesis from methylamine. It participates in one-carbon metabolism; methanogenesis from dimethylamine. It functions in the pathway one-carbon metabolism; methanogenesis from trimethylamine. In terms of biological role, reductase required for the activation of corrinoid-dependent methylamine methyltransferase reactions during methanogenesis. Mediates the ATP-dependent reduction of corrinoid proteins from the inactive cobalt(II) state to the active cobalt(I) state. Acts on the corrinoid proteins involved in methanogenesis from monomethylamine (MMA), dimethylamine (DMA) and trimethylamine (TMA), namely MtmC, MtbC and MttC, respectively. The chain is [Co(II) methylated amine-specific corrinoid protein] reductase from Methanosarcina barkeri.